Consider the following 709-residue polypeptide: Phosphoribosylformylglycinamidine synthase subunit PurL (709 aa).

Histidine 36 is an active-site residue. ATP-binding residues include tyrosine 39 and lysine 80. Glutamate 82 is a Mg(2+) binding site. Residues 83-86 (SHNH) and arginine 105 contribute to the substrate site. Residue histidine 84 is the Proton acceptor of the active site. Aspartate 106 serves as a coordination point for Mg(2+). Residue glutamine 226 participates in substrate binding. Aspartate 252 is a Mg(2+) binding site. 294 to 296 (ETQ) contacts substrate. Residues aspartate 470 and glycine 507 each coordinate ATP. Serine 510 is a substrate binding site.

It belongs to the FGAMS family. As to quaternary structure, monomer. Part of the FGAM synthase complex composed of 1 PurL, 1 PurQ and 2 PurS subunits.

It localises to the cytoplasm. It catalyses the reaction N(2)-formyl-N(1)-(5-phospho-beta-D-ribosyl)glycinamide + L-glutamine + ATP + H2O = 2-formamido-N(1)-(5-O-phospho-beta-D-ribosyl)acetamidine + L-glutamate + ADP + phosphate + H(+). Its pathway is purine metabolism; IMP biosynthesis via de novo pathway; 5-amino-1-(5-phospho-D-ribosyl)imidazole from N(2)-formyl-N(1)-(5-phospho-D-ribosyl)glycinamide: step 1/2. In terms of biological role, part of the phosphoribosylformylglycinamidine synthase complex involved in the purines biosynthetic pathway. Catalyzes the ATP-dependent conversion of formylglycinamide ribonucleotide (FGAR) and glutamine to yield formylglycinamidine ribonucleotide (FGAM) and glutamate. The FGAM synthase complex is composed of three subunits. PurQ produces an ammonia molecule by converting glutamine to glutamate. PurL transfers the ammonia molecule to FGAR to form FGAM in an ATP-dependent manner. PurS interacts with PurQ and PurL and is thought to assist in the transfer of the ammonia molecule from PurQ to PurL. The protein is Phosphoribosylformylglycinamidine synthase subunit PurL of Saccharolobus islandicus (strain M.16.4 / Kamchatka #3) (Sulfolobus islandicus).